We begin with the raw amino-acid sequence, 22 residues long: Zinc metalloproteinase oxiagin (22 aa).

A Peptidase M12B domain is found at 14-22 (CYIEFYVVV).

Belongs to the venom metalloproteinase (M12B) family. P-III subfamily. P-IIId sub-subfamily. Heterotrimer; disulfide-linked. The heterotrimer consists of 1 metalloproteinase chain and 2 lectin chains. Requires Zn(2+) as cofactor. In terms of processing, N-glycosylated. In terms of tissue distribution, expressed by the venom gland.

It is found in the secreted. Snake venom metalloproteinase that inhibits the classical complement pathway dose-dependently. It acts by binding to carbohydrates of IgG within the antibody-sensitized sheep erythrocytes (EA) complex, and thus prevents interaction of component C2 with immobilized C4b. Also induces cation-independent hemagglutination that can be prevented by D-galactose pretreatment. The protein is Zinc metalloproteinase oxiagin of Naja oxiana (Central Asian cobra).